The following is a 205-amino-acid chain: Putative 3-methyladenine DNA glycosylase (205 aa).

The protein belongs to the DNA glycosylase MPG family.

The protein is Putative 3-methyladenine DNA glycosylase of Bacillus cereus (strain ZK / E33L).